The following is a 499-amino-acid chain: Aspartyl/glutamyl-tRNA(Asn/Gln) amidotransferase subunit B (499 aa).

Belongs to the GatB/GatE family. GatB subfamily. Heterotrimer of A, B and C subunits.

It catalyses the reaction L-glutamyl-tRNA(Gln) + L-glutamine + ATP + H2O = L-glutaminyl-tRNA(Gln) + L-glutamate + ADP + phosphate + H(+). It carries out the reaction L-aspartyl-tRNA(Asn) + L-glutamine + ATP + H2O = L-asparaginyl-tRNA(Asn) + L-glutamate + ADP + phosphate + 2 H(+). Functionally, allows the formation of correctly charged Asn-tRNA(Asn) or Gln-tRNA(Gln) through the transamidation of misacylated Asp-tRNA(Asn) or Glu-tRNA(Gln) in organisms which lack either or both of asparaginyl-tRNA or glutaminyl-tRNA synthetases. The reaction takes place in the presence of glutamine and ATP through an activated phospho-Asp-tRNA(Asn) or phospho-Glu-tRNA(Gln). This Bartonella tribocorum (strain CIP 105476 / IBS 506) protein is Aspartyl/glutamyl-tRNA(Asn/Gln) amidotransferase subunit B.